Consider the following 242-residue polypeptide: Carboxy-S-adenosyl-L-methionine synthase (242 aa).

Residues Y39, 64–66 (GCS), 89–90 (DN), 117–118 (DI), N132, and R199 contribute to the S-adenosyl-L-methionine site.

It belongs to the class I-like SAM-binding methyltransferase superfamily. Cx-SAM synthase family. As to quaternary structure, homodimer.

The catalysed reaction is prephenate + S-adenosyl-L-methionine = carboxy-S-adenosyl-L-methionine + 3-phenylpyruvate + H2O. Its function is as follows. Catalyzes the conversion of S-adenosyl-L-methionine (SAM) to carboxy-S-adenosyl-L-methionine (Cx-SAM). The sequence is that of Carboxy-S-adenosyl-L-methionine synthase from Aliivibrio fischeri (strain ATCC 700601 / ES114) (Vibrio fischeri).